Consider the following 542-residue polypeptide: MNSSLQVGIGIDVGSSSARIGVYNYYNDALLEMAQEPVPYYQDSSKKSWKFWQKSTEIIKALQKCLQKLNIREYEVKSCGVSATCSLAIFERDRTSNMLIPYPNEDNVIFWMDSSAVNECQWLNMQCPQQLLDYLGGKFVPEMGVPKLKYFLDEYSHLRDKHFHIFDLHQYIAYELSRLYEWNIEGLLGRENLNGIGNDGEVSGWSSSFYKNIINLPSNVSIGTTSLVANKHISTTVVRSCIDSYASWFAVASPHLETSLFMIAGTSSCYMYGTTISDTRIPGVWGPFDTILDNRGDFSVYAAGQSCTGKLIEHLFESHPCARKILKDGADIYQVLEQTIRDIEKNNGLSIHILTKDMFFYGDYEGNRTPFADPRIKGSFIGESTDTSMLNLTYKYICILEFLSFQTKLIIDTFQNENSNIHIKELRISGSQAKNERLLSLISLVNNGVAIIKPKENVDMMGIKGAYVLAKSAKEKKQLADVITERDISNDSEKFESLAEYRLGNDSILLRKLLCVKYHIHLDMAKQQKRYHKLVDEVFQHL.

The chain is Protein MPA43 (MPA43) from Saccharomyces cerevisiae (strain ATCC 204508 / S288c) (Baker's yeast).